A 629-amino-acid chain; its full sequence is DNA-directed RNA polymerase III subunit rpc3 (629 aa).

Disordered stretches follow at residues 136–164 (ANGVPEEHGEHEEDEEQSNGLNGEHSNEQ), 247–294 (PRGA…EMGY), and 373–420 (QLDL…SGGN). The span at 257-268 (RRADEPNKKCRT) shows a compositional bias: basic and acidic residues. Over residues 272-293 (SVDENDEHDEEEENEWSDDEMG) the composition is skewed to acidic residues. The segment covering 374-388 (LDLSSSTGPMDSSQP) has biased composition (polar residues). The span at 389-409 (DGRRGKRPWDGDVEGTNHEEA) shows a compositional bias: basic and acidic residues. The leucine-zipper stretch occupies residues 556 to 577 (TYKAMSRCLQRLRFERSRIKDF).

This sequence belongs to the RNA polymerase beta chain family. In terms of assembly, component of the RNA polymerase III (Pol III) complex consisting of 17 subunits.

Its subcellular location is the nucleus. Its function is as follows. DNA-dependent RNA polymerase catalyzes the transcription of DNA into RNA using the four ribonucleoside triphosphates as substrates. Specific core component of RNA polymerase III which synthesizes small RNAs, such as 5S rRNA and tRNAs. The chain is DNA-directed RNA polymerase III subunit rpc3 (rpc82) from Aspergillus fumigatus (strain ATCC MYA-4609 / CBS 101355 / FGSC A1100 / Af293) (Neosartorya fumigata).